Reading from the N-terminus, the 536-residue chain is Xylulose kinase (536 aa).

H99, R170, D280, and N281 together coordinate substrate. ATP is bound by residues W355, 441–442 (GA), and N445.

Belongs to the FGGY kinase family. Monomer.

It carries out the reaction D-xylulose + ATP = D-xylulose 5-phosphate + ADP + H(+). Functionally, phosphorylates D-xylulose to produce D-xylulose 5-phosphate, a molecule that may play an important role in the regulation of glucose metabolism and lipogenesis. This Rattus norvegicus (Rat) protein is Xylulose kinase (Xylb).